Here is a 166-residue protein sequence, read N- to C-terminus: Probable tyrosine-protein phosphatase DG1060 (166 aa).

One can recognise a Tyrosine-protein phosphatase domain in the interval 9–162; it reads NFGMVADDLY…LVTYNNAPQW (154 aa). The active-site Phosphocysteine intermediate is Cys101.

The protein belongs to the protein-tyrosine phosphatase family.

It localises to the cytoplasm. The enzyme catalyses O-phospho-L-tyrosyl-[protein] + H2O = L-tyrosyl-[protein] + phosphate. The chain is Probable tyrosine-protein phosphatase DG1060 (DG1060) from Dictyostelium discoideum (Social amoeba).